Consider the following 389-residue polypeptide: Epidermis-specific secreted glycoprotein EP1 (389 aa).

Positions 1 to 24 (MARFFPLTLTILLFFIQRIDFCHT) are cleaved as a signal peptide. Residue Asn29 is glycosylated (N-linked (GlcNAc...) (complex) asparagine). The 106-residue stretch at 88 to 193 (MRWVWEANRG…ASPGENVNGP (106 aa)) folds into the Bulb-type lectin domain. 3 N-linked (GlcNAc...) asparagine glycosylation sites follow: Asn103, Asn230, and Asn235. An N-linked (GlcNAc...) (high mannose) asparagine glycan is attached at Asn274.

As to expression, in 14-day old seedlings, expressed in the epidermis and apical dome of the shoot and in the hypocotyl, cotyledon and epidermis of the root. In developing seeds, expressed in both the inner and outer epidermis of the integument.

It is found in the secreted. May be involved in the limitation of water flow through the outer epidermal cell wall, either by direct modification of wall structure or as a signal instructing the protoplast to restrict water transport across the cell wall. This Daucus carota (Wild carrot) protein is Epidermis-specific secreted glycoprotein EP1 (EP1).